Consider the following 345-residue polypeptide: NADH-quinone oxidoreductase subunit H (345 aa).

8 helical membrane passes run A9 to A29, V82 to V102, V108 to G128, M154 to V174, L183 to F203, Y241 to V261, L282 to V302, and I325 to L345.

It belongs to the complex I subunit 1 family. As to quaternary structure, NDH-1 is composed of 14 different subunits. Subunits NuoA, H, J, K, L, M, N constitute the membrane sector of the complex.

The protein resides in the cell inner membrane. It catalyses the reaction a quinone + NADH + 5 H(+)(in) = a quinol + NAD(+) + 4 H(+)(out). Its function is as follows. NDH-1 shuttles electrons from NADH, via FMN and iron-sulfur (Fe-S) centers, to quinones in the respiratory chain. The immediate electron acceptor for the enzyme in this species is believed to be ubiquinone. Couples the redox reaction to proton translocation (for every two electrons transferred, four hydrogen ions are translocated across the cytoplasmic membrane), and thus conserves the redox energy in a proton gradient. This subunit may bind ubiquinone. This is NADH-quinone oxidoreductase subunit H from Salinibacter ruber (strain DSM 13855 / M31).